The chain runs to 345 residues: Calcium uniporter regulatory subunit MCUb, mitochondrial (345 aa).

Residues 1–44 (MPGALSGRRMLPSGLCLGRWQLLRTIRARGRGDPRELPSTPQVL) constitute a mitochondrion transit peptide. A coiled-coil region spans residues 188–221 (EIQKRRERHLMAKIDHLQEQLRPLEQVKAAIEAR). Helical transmembrane passes span 229 to 249 (LLWAGLALLSVQGGALAWLTW) and 259 to 279 (PVTFFLSFANSIVFFAYFIIT). Positions 306 to 334 (FDVEQYNKLKEDLAEATESLESVRRSLRL) form a coiled coil.

It belongs to the MCU (TC 1.A.77) family. Homooligomer. Associates with the uniplex complex, composed of MCU, MICU1, MICU2 and EMRE/SMDT1, inhibiting its activity. As to expression, detected in lung, brain and heart, and at lower levels in white fat, skeletal muscle and spleen. Detected at very low levels in kidney and liver. Highly expressed in macrophages during the progression of skeletal muscle regeneration.

The protein resides in the mitochondrion inner membrane. Negative regulator of the mitochondrial calcium uniporter (MCU), a channel that mediates calcium uptake into the mitochondrial matrix. MCUB is required to limit mitochondrial calcium overload during stress. Acts as a dominant-negative regulator that displaces MCU from the functional uniplex complex and thereby decreases the association of calcium sensors MICU1 and MICU2, preventing channel gating. Mitochondrial calcium homeostasis plays key roles in mitochondrial metabolism. Acts as an important regulator of mitochondrial metabolism in response to stress in muscle cells: induced in response to fasting, leading to restrict mitochondrial calcium uptake, resulting in reprogramming of mitochondria toward fatty acid oxidation preference. Acts as a regulator of macrophage polarization during skeletal muscle regeneration: inhibition of mitochondrial calcium uptake drives differentiation of macrophages with anti-inflammatory profile, promoting the differentiation and fusion of satellite cells. This is Calcium uniporter regulatory subunit MCUb, mitochondrial from Mus musculus (Mouse).